Here is a 459-residue protein sequence, read N- to C-terminus: V-type ATP synthase beta chain (459 aa).

The protein belongs to the ATPase alpha/beta chains family.

Its function is as follows. Produces ATP from ADP in the presence of a proton gradient across the membrane. The V-type beta chain is a regulatory subunit. This is V-type ATP synthase beta chain from Thermoanaerobacter pseudethanolicus (strain ATCC 33223 / 39E) (Clostridium thermohydrosulfuricum).